The chain runs to 151 residues: Deoxyuridine 5'-triphosphate nucleotidohydrolase (151 aa).

Substrate contacts are provided by residues 70 to 72, N83, 87 to 89, and M97; these read RSG and LID.

It belongs to the dUTPase family. It depends on Mg(2+) as a cofactor.

The catalysed reaction is dUTP + H2O = dUMP + diphosphate + H(+). The protein operates within pyrimidine metabolism; dUMP biosynthesis; dUMP from dCTP (dUTP route): step 2/2. Its function is as follows. This enzyme is involved in nucleotide metabolism: it produces dUMP, the immediate precursor of thymidine nucleotides and it decreases the intracellular concentration of dUTP so that uracil cannot be incorporated into DNA. This is Deoxyuridine 5'-triphosphate nucleotidohydrolase from Actinobacillus pleuropneumoniae serotype 7 (strain AP76).